The sequence spans 1357 residues: DNA-directed RNA polymerase subunit beta (1357 aa).

Belongs to the RNA polymerase beta chain family. In terms of assembly, the RNAP catalytic core consists of 2 alpha, 1 beta, 1 beta' and 1 omega subunit. When a sigma factor is associated with the core the holoenzyme is formed, which can initiate transcription.

The catalysed reaction is RNA(n) + a ribonucleoside 5'-triphosphate = RNA(n+1) + diphosphate. Functionally, DNA-dependent RNA polymerase catalyzes the transcription of DNA into RNA using the four ribonucleoside triphosphates as substrates. The protein is DNA-directed RNA polymerase subunit beta of Acinetobacter baumannii (strain ATCC 17978 / DSM 105126 / CIP 53.77 / LMG 1025 / NCDC KC755 / 5377).